The primary structure comprises 228 residues: Endonuclease V (228 aa).

Mg(2+)-binding residues include aspartate 36 and aspartate 104.

The protein belongs to the endonuclease V family. Mg(2+) is required as a cofactor.

The protein resides in the cytoplasm. It catalyses the reaction Endonucleolytic cleavage at apurinic or apyrimidinic sites to products with a 5'-phosphate.. In terms of biological role, DNA repair enzyme involved in the repair of deaminated bases. Selectively cleaves double-stranded DNA at the second phosphodiester bond 3' to a deoxyinosine leaving behind the intact lesion on the nicked DNA. This chain is Endonuclease V, found in Serratia proteamaculans (strain 568).